The following is a 252-amino-acid chain: Undecaprenyl-diphosphatase (252 aa).

7 helical membrane-spanning segments follow: residues 1 to 21 (MTTLEAVILGIVEGLTEFLPI), 42 to 62 (HKAFEVSIQLGSILAVVFLYF), 74 to 94 (ILIAFIPTGILGFVLYKIIKS), 95 to 115 (LFNPYIVVFMLVFGGLLLILI), 172 to 192 (AAEFSFMLAVPTMFMATFYDV), 206 to 226 (NLIVGFVVAFISALFAIKWLL), and 232 to 252 (HSFIPFGIYRIILGILYYLWY).

The protein belongs to the UppP family.

The protein localises to the cell inner membrane. It catalyses the reaction di-trans,octa-cis-undecaprenyl diphosphate + H2O = di-trans,octa-cis-undecaprenyl phosphate + phosphate + H(+). In terms of biological role, catalyzes the dephosphorylation of undecaprenyl diphosphate (UPP). Confers resistance to bacitracin. This is Undecaprenyl-diphosphatase from Sulfurihydrogenibium sp. (strain YO3AOP1).